The primary structure comprises 216 residues: Ribosomal RNA large subunit methyltransferase E (216 aa).

Residues Gly60, Trp62, Asp80, Asp96, and Asp121 each contribute to the S-adenosyl-L-methionine site. The active-site Proton acceptor is Lys161.

This sequence belongs to the class I-like SAM-binding methyltransferase superfamily. RNA methyltransferase RlmE family.

Its subcellular location is the cytoplasm. It carries out the reaction uridine(2552) in 23S rRNA + S-adenosyl-L-methionine = 2'-O-methyluridine(2552) in 23S rRNA + S-adenosyl-L-homocysteine + H(+). Specifically methylates the uridine in position 2552 of 23S rRNA at the 2'-O position of the ribose in the fully assembled 50S ribosomal subunit. The chain is Ribosomal RNA large subunit methyltransferase E from Pseudomonas savastanoi pv. phaseolicola (strain 1448A / Race 6) (Pseudomonas syringae pv. phaseolicola (strain 1448A / Race 6)).